The chain runs to 28 residues: Humanin-like 2 (28 aa).

The protein belongs to the humanin family. As to expression, highly expressed in testis. Also expressed in kidney, heart, skeletal muscles and brain.

It is found in the secreted. The protein localises to the cytoplasm. Functionally, plays a role as a neuroprotective and antiapoptotic factor. The chain is Humanin-like 2 from Homo sapiens (Human).